The primary structure comprises 275 residues: Large ribosomal subunit protein uL2c (275 aa).

Residues 225–259 (KNPVDHPHGGGEGRAPIGRSTPVTPWGKPALGRRT) are disordered.

The protein belongs to the universal ribosomal protein uL2 family. Part of the 50S ribosomal subunit.

The protein resides in the plastid. It localises to the cyanelle. The sequence is that of Large ribosomal subunit protein uL2c (rpl2) from Cyanophora paradoxa.